Here is a 246-residue protein sequence, read N- to C-terminus: Purine nucleoside phosphorylase ORF3 (246 aa).

3 residues coordinate Zn(2+): histidine 71, cysteine 110, and histidine 127.

Belongs to the purine nucleoside phosphorylase YfiH/LACC1 family. In terms of assembly, homodimer. Cu(2+) is required as a cofactor. It depends on Zn(2+) as a cofactor.

It carries out the reaction adenosine + phosphate = alpha-D-ribose 1-phosphate + adenine. The catalysed reaction is S-methyl-5'-thioadenosine + phosphate = 5-(methylsulfanyl)-alpha-D-ribose 1-phosphate + adenine. The enzyme catalyses inosine + phosphate = alpha-D-ribose 1-phosphate + hypoxanthine. It catalyses the reaction adenosine + H2O + H(+) = inosine + NH4(+). Its function is as follows. Purine nucleoside enzyme that catalyzes the phosphorolysis of adenosine and inosine nucleosides, yielding D-ribose 1-phosphate and the respective free bases, adenine and hypoxanthine. Also catalyzes the phosphorolysis of S-methyl-5'-thioadenosine into adenine and S-methyl-5-thio-alpha-D-ribose 1-phosphate. Also has adenosine deaminase activity. In Streptomyces griseus, this protein is Purine nucleoside phosphorylase ORF3.